The chain runs to 482 residues: Methylenetetrahydrofolate--tRNA-(uracil-5-)-methyltransferase TrmFO (482 aa).

20 to 25 provides a ligand contact to FAD; that stretch reads GGGLAG.

The protein belongs to the MnmG family. TrmFO subfamily. It depends on FAD as a cofactor.

Its subcellular location is the cytoplasm. It carries out the reaction uridine(54) in tRNA + (6R)-5,10-methylene-5,6,7,8-tetrahydrofolate + NADH + H(+) = 5-methyluridine(54) in tRNA + (6S)-5,6,7,8-tetrahydrofolate + NAD(+). It catalyses the reaction uridine(54) in tRNA + (6R)-5,10-methylene-5,6,7,8-tetrahydrofolate + NADPH + H(+) = 5-methyluridine(54) in tRNA + (6S)-5,6,7,8-tetrahydrofolate + NADP(+). In terms of biological role, catalyzes the folate-dependent formation of 5-methyl-uridine at position 54 (M-5-U54) in all tRNAs. The chain is Methylenetetrahydrofolate--tRNA-(uracil-5-)-methyltransferase TrmFO from Rhodopseudomonas palustris (strain HaA2).